The following is a 975-amino-acid chain: MLSRLSLLSNSRAFQQARWRIYRLKVSPTVHASQYHILSGRKLAQSIREKANDEIQAIKLKHPNFKPTLKIIQVGARPDSSTYVRMKLKASKDSNVDCIIEKLPAEITEVELLKKISDINDDDSIHGLLIQLPLPRHLDETTITNAVDFKKDVDGFHRYNAGELAKKGGKPYFIPCTPYGCMKLLEEAHVKLDGKNAVVLGRSSIVGNPIASLLKNANATVTVCHSHTRNIAEVVSQADIVIAACGIPQYVKSDWIKEGAVVIDVGINYVPDISKKSGQKLVGDVDFDSVKEKTSYITPVPGGVGPMTVAMLVSNVLLAAKRQFVESEKLPVIKPLPLHLESPVPSDIDISRAQSPKHIKQVAEELGIHSHELELYGHYKAKISPNIFKRLESRENGKYVLVAGITPTPLGEGKSTTTMGLVQALSAHLGKPSIANVRQPSLGPTLGVKGGAAGGGYAQVIPMDEFNLHLTGDIHAISAANNLLAAAIDTRMFHEATQKNDSTFYKRLVPRKKGIRKFTPSMQRRLKRLDIEKEDPDALTPEEVKRFARLNINPDTITIRRVVDINDRMLRQITIGEAATEKGFTRTTGFDITVASELMAILALSKSLHEMKERIGRMVIGADYDNKPVTVEDIGCTGALTALLRDAIKPNLMQTLEGTPVMVHAGPFANISIGASSVIADLMALKLVGSEKNPLNDKNIHEPGYVVTEAGFDFAMGGERFFDIKCRSSGLVPDAVVLVATVRALKSHGGAPNVKPGQSLPKEYTEENIDFVAKGVSNLVKQIENIKTFGIPVVVAINRFETDSQAEIEVIKKAALNAGASHAVTSNHWMEGGKGAVELAHAVVDATKEPKNFNFLYDVNSSIEDKLTSIVQKMYGGAKIEVSPEAQKKIDTYKKQGFGNLPICIAKTQYSLSHDPSLKGVPRGFTFPIRDVRASIGAGYLYALAAEIQTIPGLSTYAGYMAVEVDDDGEIEGLF.

The transit peptide at 1-34 (MLSRLSLLSNSRAFQQARWRIYRLKVSPTVHASQ) directs the protein to the mitochondrion. A methylenetetrahydrofolate dehydrogenase and cyclohydrolase region spans residues 35 to 343 (YHILSGRKLA…KPLPLHLESP (309 aa)). Residues 83-87 (YVRMK) and 130-132 (IQL) each bind substrate. NADP(+) is bound by residues 201–203 (GRS) and serine 226. 301-305 (PGGVG) is a substrate binding site. Residues 344–975 (VPSDIDISRA…DDDGEIEGLF (632 aa)) form a formyltetrahydrofolate synthetase region. Residue 408–415 (TPLGEGKS) participates in ATP binding.

The protein in the N-terminal section; belongs to the tetrahydrofolate dehydrogenase/cyclohydrolase family. This sequence in the C-terminal section; belongs to the formate--tetrahydrofolate ligase family. In terms of assembly, homodimer.

The protein resides in the mitochondrion. It catalyses the reaction (6R)-5,10-methylene-5,6,7,8-tetrahydrofolate + NADP(+) = (6R)-5,10-methenyltetrahydrofolate + NADPH. The catalysed reaction is (6R)-5,10-methenyltetrahydrofolate + H2O = (6R)-10-formyltetrahydrofolate + H(+). It carries out the reaction (6S)-5,6,7,8-tetrahydrofolate + formate + ATP = (6R)-10-formyltetrahydrofolate + ADP + phosphate. Its pathway is one-carbon metabolism; tetrahydrofolate interconversion. Its function is as follows. Mitochondrial isozyme of C-1-tetrahydrofolate synthase. The trifunctional enzyme catalyzes the interconversion of the one-carbon derivatives of tetrahydrofolate (THF) between different oxidation states by the enzymatic activities 10-formyltetrahydrofolate synthetase, 5,lO-methenyltetrahydrofolate cyclohydrolase, and 5,lO-methylenetetrahydrofolate dehydrogenase. This is C-1-tetrahydrofolate synthase, mitochondrial from Saccharomyces cerevisiae (strain ATCC 204508 / S288c) (Baker's yeast).